Here is a 511-residue protein sequence, read N- to C-terminus: ATP synthase subunit alpha, mitochondrial (511 aa).

An ATP-binding site is contributed by 171 to 178 (GDRQTGKT).

This sequence belongs to the ATPase alpha/beta chains family. As to quaternary structure, F-type ATPases have 2 components, CF(1) - the catalytic core - and CF(0) - the membrane proton channel. CF(1) has five subunits: alpha(3), beta(3), gamma(1), delta(1), epsilon(1). CF(0) has three main subunits: a, b and c.

Its subcellular location is the mitochondrion. It localises to the mitochondrion inner membrane. Mitochondrial membrane ATP synthase (F(1)F(0) ATP synthase or Complex V) produces ATP from ADP in the presence of a proton gradient across the membrane which is generated by electron transport complexes of the respiratory chain. F-type ATPases consist of two structural domains, F(1) - containing the extramembraneous catalytic core, and F(0) - containing the membrane proton channel, linked together by a central stalk and a peripheral stalk. During catalysis, ATP synthesis in the catalytic domain of F(1) is coupled via a rotary mechanism of the central stalk subunits to proton translocation. Subunits alpha and beta form the catalytic core in F(1). Rotation of the central stalk against the surrounding alpha(3)beta(3) subunits leads to hydrolysis of ATP in three separate catalytic sites on the beta subunits. Subunit alpha does not bear the catalytic high-affinity ATP-binding sites. This is ATP synthase subunit alpha, mitochondrial (ATPA) from Oenothera biennis (German evening primrose).